A 148-amino-acid chain; its full sequence is UPF0756 membrane protein KPN78578_11500 (148 aa).

The next 4 membrane-spanning stretches (helical) occupy residues 14-34, 51-71, 86-106, and 121-141; these read ALGF…LIIV, LTVG…SGTL, LLAI…VSLM, and VLGV…AGII.

This sequence belongs to the UPF0756 family.

Its subcellular location is the cell membrane. The polypeptide is UPF0756 membrane protein KPN78578_11500 (Klebsiella pneumoniae subsp. pneumoniae (strain ATCC 700721 / MGH 78578)).